A 105-amino-acid polypeptide reads, in one-letter code: Large ribosomal subunit protein bL21 (105 aa).

It belongs to the bacterial ribosomal protein bL21 family. As to quaternary structure, part of the 50S ribosomal subunit. Contacts protein L20.

Functionally, this protein binds to 23S rRNA in the presence of protein L20. The chain is Large ribosomal subunit protein bL21 from Parafrankia sp. (strain EAN1pec).